The chain runs to 1336 residues: Glutamate receptor ionotropic, NMDA 2D (1336 aa).

An N-terminal signal peptide occupies residues 1 to 27 (MRGAGGPRGPRGPAKMLLLLALACASP). At 28–582 (FPEEAPGPGG…SPSAFLEPYS (555 aa)) the chain is on the extracellular side. N-linked (GlcNAc...) asparagine glycosylation is present at Asn92. Cys104 and Cys348 form a disulfide bridge. 4 N-linked (GlcNAc...) asparagine glycosylation sites follow: Asn352, Asn366, Asn384, and Asn467. Disulfide bonds link Cys455–Cys483 and Cys462–Cys484. Residues Ser539, Thr541, and Arg546 each coordinate L-glutamate. Residue Asn569 is glycosylated (N-linked (GlcNAc...) asparagine). A helical membrane pass occupies residues 583-604 (PAVWVMMFVMCLTVVAVTVFIF). Residues 605 to 629 (EYLSPVGYNRSLATGKRPGGSTFTI) lie on the Cytoplasmic side of the membrane. The segment at residues 630-641 (GKSIWLLWALVF) is an intramembrane region (discontinuously helical). The tract at residues 631 to 650 (KSIWLLWALVFNNSVPVENP) is pore-forming. Over 642–653 (NNSVPVENPRGT) the chain is Cytoplasmic. The helical transmembrane segment at 654 to 674 (TSKIMVLVWAFFAVIFLASYT) threads the bilayer. The Extracellular portion of the chain corresponds to 675 to 843 (ANLAAFMIQE…EVMSSKLDID (169 aa)). The L-glutamate site is built by Ser717, Thr718, and Asp759. Cys773 and Cys828 are disulfide-bonded. The helical transmembrane segment at 844–867 (NMAGVFYMLLVAMGLSLLVFAWEH) threads the bilayer. The Cytoplasmic segment spans residues 868-1336 (LVYWRLRHCL…AHFSSLESEV (469 aa)). Disordered regions lie at residues 900–934 (EAAP…PFVP), 981–1123 (RAAP…SLGG), and 1225–1336 (RCGC…ESEV). The segment covering 902–932 (APPPAKPPPPPQPLPSPAYPAPRPAPGPAPF) has biased composition (pro residues). A compositionally biased stretch (low complexity) spans 981–991 (RAAPRGAAGRP). The segment covering 992 to 1006 (LSPPAAQPPQKPPPS) has biased composition (pro residues). Residues 1035–1044 (AAAATAVGPP) show a composition bias toward low complexity. A compositionally biased stretch (gly residues) spans 1074–1089 (PGAGGAGGTGGAGGGA). Residues 1091 to 1104 (AAPPPCRAAPPPCP) show a composition bias toward pro residues. Positions 1225–1240 (RCGCPRSHPHRPRASH) are enriched in basic residues. Arg1316 is modified (omega-N-methylarginine). Ser1326 carries the post-translational modification Phosphoserine. The PDZ-binding motif lies at 1334–1336 (SEV).

The protein belongs to the glutamate-gated ion channel (TC 1.A.10.1) family. NR2D/GRIN2D subfamily. Heterotetramer. Forms heterotetrameric channels composed of two GluN1/zeta subunits (GRIN1), and two identical GluN2/epsilon subunits (GRIN2A, GRIN2B, GRIN2C or GRIN2D) or GluN3 subunits (GRIN3A or GRIN3B) (in vitro). In vivo, the subunit composition may depend on the expression levels of the different subunits. Interacts with PDZ domains of PATJ and DLG4.

Its subcellular location is the cell membrane. The protein localises to the postsynaptic cell membrane. It carries out the reaction Ca(2+)(in) = Ca(2+)(out). It catalyses the reaction Na(+)(in) = Na(+)(out). The catalysed reaction is K(+)(in) = K(+)(out). Functionally, component of N-methyl-D-aspartate (NMDA) receptors (NMDARs) that function as heterotetrameric, ligand-gated cation channels with high calcium permeability and voltage-dependent block by Mg(2+). Participates in synaptic plasticity for learning and memory formation. Channel activation requires binding of the neurotransmitter L-glutamate to the GluN2 subunit, glycine or D-serine binding to the GluN1 subunit, plus membrane depolarization to eliminate channel inhibition by Mg(2+). NMDARs mediate simultaneously the potasium efflux and the influx of calcium and sodium. Each GluN2 subunit confers differential attributes to channel properties, including activation, deactivation and desensitization kinetics, pH sensitivity, Ca2(+) permeability, and binding to allosteric modulators. The protein is Glutamate receptor ionotropic, NMDA 2D of Homo sapiens (Human).